The chain runs to 115 residues: Regulator of ribonuclease activity B (115 aa).

The protein belongs to the RraB family. Interacts with the C-terminal region of Rne.

It localises to the cytoplasm. Globally modulates RNA abundance by binding to RNase E (Rne) and regulating its endonucleolytic activity. Can modulate Rne action in a substrate-dependent manner by altering the composition of the degradosome. The polypeptide is Regulator of ribonuclease activity B (Aeromonas hydrophila subsp. hydrophila (strain ATCC 7966 / DSM 30187 / BCRC 13018 / CCUG 14551 / JCM 1027 / KCTC 2358 / NCIMB 9240 / NCTC 8049)).